The following is a 372-amino-acid chain: Putative glutamate--cysteine ligase 2 (372 aa).

Belongs to the glutamate--cysteine ligase type 2 family. YbdK subfamily. In terms of assembly, homodimer.

It catalyses the reaction L-cysteine + L-glutamate + ATP = gamma-L-glutamyl-L-cysteine + ADP + phosphate + H(+). Its function is as follows. ATP-dependent carboxylate-amine ligase which exhibits weak glutamate--cysteine ligase activity. This Escherichia coli O81 (strain ED1a) protein is Putative glutamate--cysteine ligase 2 (ybdK).